Here is a 135-residue protein sequence, read N- to C-terminus: C-type lectin APL (135 aa).

Intrachain disulfides connect Cys-3–Cys-14, Cys-31–Cys-131, Cys-38–Cys-133, and Cys-106–Cys-123. Residues 10–132 (MNGLCYKIFD…CESKNAFLCQ (123 aa)) enclose the C-type lectin domain. Residues Gln-96, Asp-98, Glu-104, Asn-119, and Asp-120 each contribute to the Ca(2+) site. The short motif at 96–98 (QPD) is the Galactose-binding element.

Belongs to the true venom lectin family. As to quaternary structure, homodimer; disulfide-linked. Expressed by the venom gland.

It localises to the secreted. Its function is as follows. Beta-galactoside lectin that agglutinates rabbit and human erythrocytes in a calcium-dependent fashion (MHC is 0.21 ug/ml on rabbit erythrocytes). Galactose (15 mM), lactose (20 mM), rhamnose (20 mM) and EGTA strongly inhibit this activity. The sequence is that of C-type lectin APL from Agkistrodon piscivorus piscivorus (Eastern cottonmouth).